The primary structure comprises 374 residues: MRSERLRWLVAAEGPFASVYFDDSHDTLDAVERREATWRDVRKHLESRDAKQELIDSLEEAVRDSRPAVGQRGRALIATGEQVLVNEHLIGPPPATVIRLSDYPYVVPLIDLEMRRPTYVFAAVDHTGADVKLYQGATISSTKIDGVGYPVHKPVTAGWNGYGDFQHTTEEAIRMNCRAVADHLTRLVDAADPEVVFVSGEVRSRTDLLSTLPQRVAVRVSQLHAGPRKSALDEEEIWDLTSAEFTRRRYAEITNVAQQFEAEIGRGSGLAAQGLAEVCAALRDGDVDTLIVGELGEATVVTGKARTTVARDADMLSELGEPVDRVARADEALPFAAIAVGAALVRDDNRIAPLDGVGALLRYAATNRLGSHRS.

Residues 39-66 (RDVRKHLESRDAKQELIDSLEEAVRDSR) adopt a coiled-coil conformation.

This is an uncharacterized protein from Mycobacterium tuberculosis (strain CDC 1551 / Oshkosh).